The primary structure comprises 295 residues: Pyridoxal 5'-phosphate synthase subunit PdxS (295 aa).

D-ribose 5-phosphate is bound at residue Asp-25. Lys-82 acts as the Schiff-base intermediate with D-ribose 5-phosphate in catalysis. Gly-154 is a binding site for D-ribose 5-phosphate. Arg-166 lines the D-glyceraldehyde 3-phosphate pocket. D-ribose 5-phosphate is bound by residues Gly-215 and 236–237 (GS).

This sequence belongs to the PdxS/SNZ family. In the presence of PdxT, forms a dodecamer of heterodimers.

It catalyses the reaction aldehydo-D-ribose 5-phosphate + D-glyceraldehyde 3-phosphate + L-glutamine = pyridoxal 5'-phosphate + L-glutamate + phosphate + 3 H2O + H(+). The protein operates within cofactor biosynthesis; pyridoxal 5'-phosphate biosynthesis. Functionally, catalyzes the formation of pyridoxal 5'-phosphate from ribose 5-phosphate (RBP), glyceraldehyde 3-phosphate (G3P) and ammonia. The ammonia is provided by the PdxT subunit. Can also use ribulose 5-phosphate and dihydroxyacetone phosphate as substrates, resulting from enzyme-catalyzed isomerization of RBP and G3P, respectively. The chain is Pyridoxal 5'-phosphate synthase subunit PdxS from Listeria innocua serovar 6a (strain ATCC BAA-680 / CLIP 11262).